The primary structure comprises 492 residues: Excitatory amino acid transporter (492 aa).

Topologically, residues 1–7 are cytoplasmic; the sequence is MVSWIRK. The next 3 helical transmembrane spans lie at 8 to 28, 47 to 67, and 85 to 105; these read NLLL…GFLL, LLMH…LISG, and TYYM…VLVI. The Extracellular portion of the chain corresponds to 106-191; that stretch reads HPGDPTIKKE…VKASVEYTSG (86 aa). Residues asparagine 166 and asparagine 176 are each glycosylated (N-linked (GlcNAc...) asparagine). The next 5 helical transmembrane spans lie at 192-212, 228-248, 270-290, 358-378, and 389-409; these read MNVL…SQLG, VIMK…LCLI, VTVL…IFFV, AVAA…GQVV, and IGAA…LTAV.

It belongs to the dicarboxylate/amino acid:cation symporter (DAACS) (TC 2.A.23) family.

It is found in the membrane. Functionally, transports L-glutamate and also L- and D-aspartate. Essential for terminating the postsynaptic action of glutamate by rapidly removing released glutamate from the synaptic cleft. Acts as a symport by cotransporting sodium. The protein is Excitatory amino acid transporter (GLT-1) of Onchocerca volvulus.